The primary structure comprises 428 residues: NADP-specific glutamate dehydrogenase (428 aa).

Lysine 68 and lysine 92 together coordinate substrate. The Proton donor role is filled by lysine 104. NADP(+) contacts are provided by threonine 188 and asparagine 219. Position 356 (serine 356) interacts with substrate.

This sequence belongs to the Glu/Leu/Phe/Val dehydrogenases family. As to quaternary structure, homohexamer.

The enzyme catalyses L-glutamate + NADP(+) + H2O = 2-oxoglutarate + NH4(+) + NADPH + H(+). Functionally, catalyzes the reversible oxidative deamination of glutamate to alpha-ketoglutarate and ammonia. This chain is NADP-specific glutamate dehydrogenase (gdhA), found in Synechocystis sp. (strain ATCC 27184 / PCC 6803 / Kazusa).